The following is a 1164-amino-acid chain: Integrin alpha-5 (1164 aa).

The span at 1–14 (MREEGGGSREKEGE) shows a compositional bias: basic and acidic residues. Positions 1 to 119 (MREEGGGSRE…MGSRTPGSPL (119 aa)) are disordered. A compositionally biased stretch (low complexity) spans 81–90 (LLPALSHSPL). The stretch at 156-221 (NLDAEAPAVL…CPWGTSPAQC (66 aa)) is one FG-GAP 1 repeat. N197 is a glycosylation site (N-linked (GlcNAc...) asparagine). A disulfide bridge links C212 with C221. S240 carries the phosphoserine modification. FG-GAP repeat units follow at residues 241–301 (SEGE…QILE), 306–358 (RSDF…AESY), 372–424 (QTRQ…GSDI), 425–490 (RSLY…GMEP), 491–550 (TPTL…GLAS), and 554–617 (QVLL…IFPA). Residues C269 and C289 are joined by a disulfide bond. The N-linked (GlcNAc...) asparagine glycan is linked to N295. The cysteines at positions 305 and 318 are disulfide-linked. A protein contacts are provided by Q375 and D382. Positions 393, 395, 397, and 401 each coordinate Ca(2+). 3 N-linked (GlcNAc...) asparagine glycosylation sites follow: N410, N420, and N429. Ca(2+)-binding residues include D447, N449, D451, L453, D455, D514, D516, D518, Y520, D522, D578, D580, N582, Y584, and D586. A disulfide bond links C626 and C635. Residues N637, N643, N706, and N722 are each glycosylated (N-linked (GlcNAc...) asparagine). C641 and C697 form a disulfide bridge. A disulfide bridge links C758 with C764. N-linked (GlcNAc...) asparagine glycans are attached at residues N788, N825, N837, N886, and N982. The cysteines at positions 831 and 844 are disulfide-linked. Disulfide bonds link C962-C1072, C983-C1036, and C1026-C1031. Residues 983 to 1022 (CTTSHPPNPEGLELDPEGSQHHRLQRRDVPGRSPASSGPQ) form a disordered region. The helical transmembrane segment at 1114–1134 (LWIIILAILIGLLLLGLLIYI) threads the bilayer. Over 1135-1164 (LYKLGFFKRSLPYGTAMEKAQLKPPATSDA) the chain is Cytoplasmic. Residues 1136 to 1143 (YKLGFFKR) are interaction with HPS5. A GFFKR motif motif is present at residues 1139 to 1143 (GFFKR).

This sequence belongs to the integrin alpha chain family. In terms of assembly, heterodimer of an alpha and a beta subunit. The alpha subunit is composed of a heavy and a light chain linked by a disulfide bond. Alpha-5 associates with beta-1. Interacts with NISCH. Interacts with HPS5. Interacts with RAB21 and COMP. Interacts with CIB1. ITGA5:ITGB1 interacts with CCN3. ITGA5:ITGB1 interacts with FBN1. ITGA5:ITGB1 interacts with IL1B. ITGA5:ITGB1 interacts with ACE2. ITGA5:ITGB1 interacts with SELP. Interacts with ANGPT2. ITGA5:ITGB1 interacts with IGFBP2. ITGA5:ITGB1 interacts with IGFBP1. Proteolytic cleavage by PCSK5 mediates activation of the precursor.

The protein localises to the cell membrane. It is found in the cell junction. It localises to the focal adhesion. In terms of biological role, integrin alpha-5/beta-1 (ITGA5:ITGB1) is a receptor for fibronectin and fibrinogen. It recognizes the sequence R-G-D in its ligands. ITGA5:ITGB1 binds to PLA2G2A via a site (site 2) which is distinct from the classical ligand-binding site (site 1) and this induces integrin conformational changes and enhanced ligand binding to site 1. ITGA5:ITGB1 acts as a receptor for fibrillin-1 (FBN1) and mediates R-G-D-dependent cell adhesion to FBN1. ITGA5:ITGB1 acts as a receptor for fibronectin (FN1) and mediates R-G-D-dependent cell adhesion to FN1. ITGA5:ITGB1 is a receptor for IL1B and binding is essential for IL1B signaling. ITGA5:ITGB3 is a receptor for soluble CD40LG and is required for CD40/CD40LG signaling. The sequence is that of Integrin alpha-5 (ITGA5) from Bos taurus (Bovine).